A 244-amino-acid chain; its full sequence is Maintenance of ploidy protein mob2 (244 aa).

Residues 14 to 45 (NRSKRHQNLSDASSSSGSFSKKSSTSQLVRTG) are disordered. The segment covering 23–39 (SDASSSSGSFSKKSSTS) has biased composition (low complexity). Residues Ser46 and Ser48 each carry the phosphoserine modification.

The protein belongs to the MOB1/phocein family. In terms of assembly, interacts with orb6.

It is found in the cytoplasm. The protein resides in the cell cortex. In terms of biological role, required for coordinating polarized cell growth during interphase with the onset of mitosis. In Schizosaccharomyces pombe (strain 972 / ATCC 24843) (Fission yeast), this protein is Maintenance of ploidy protein mob2 (mob2).